The primary structure comprises 216 residues: Peptide methionine sulfoxide reductase MsrA (216 aa).

C54 is an active-site residue.

This sequence belongs to the MsrA Met sulfoxide reductase family.

The catalysed reaction is L-methionyl-[protein] + [thioredoxin]-disulfide + H2O = L-methionyl-(S)-S-oxide-[protein] + [thioredoxin]-dithiol. It carries out the reaction [thioredoxin]-disulfide + L-methionine + H2O = L-methionine (S)-S-oxide + [thioredoxin]-dithiol. Has an important function as a repair enzyme for proteins that have been inactivated by oxidation. Catalyzes the reversible oxidation-reduction of methionine sulfoxide in proteins to methionine. In Xanthomonas campestris pv. campestris (strain 8004), this protein is Peptide methionine sulfoxide reductase MsrA.